We begin with the raw amino-acid sequence, 406 residues long: Glutamyl-tRNA reductase (406 aa).

Substrate contacts are provided by residues 51–54 (TCNR), Ser-101, 106–108 (ESE), and Gln-112. Cys-52 acts as the Nucleophile in catalysis. Position 180–185 (180–185 (GAGSIG)) interacts with NADP(+).

It belongs to the glutamyl-tRNA reductase family. As to quaternary structure, homodimer.

The catalysed reaction is (S)-4-amino-5-oxopentanoate + tRNA(Glu) + NADP(+) = L-glutamyl-tRNA(Glu) + NADPH + H(+). The protein operates within porphyrin-containing compound metabolism; protoporphyrin-IX biosynthesis; 5-aminolevulinate from L-glutamyl-tRNA(Glu): step 1/2. Its function is as follows. Catalyzes the NADPH-dependent reduction of glutamyl-tRNA(Glu) to glutamate 1-semialdehyde (GSA). The chain is Glutamyl-tRNA reductase from Caldivirga maquilingensis (strain ATCC 700844 / DSM 13496 / JCM 10307 / IC-167).